A 437-amino-acid polypeptide reads, in one-letter code: Ribosomal protein uS12 methylthiotransferase RimO (437 aa).

An MTTase N-terminal domain is found at 4–114 (PRIGFISLGC…VMNAVHEHLP (111 aa)). Cysteine 13, cysteine 49, cysteine 78, cysteine 145, cysteine 149, and cysteine 152 together coordinate [4Fe-4S] cluster. The Radical SAM core domain maps to 131-368 (LTPRHYAYLK…MEVQERISAA (238 aa)). The TRAM domain occupies 371–437 (RTRIGRTETV…AHDLWARLAD (67 aa)).

The protein belongs to the methylthiotransferase family. RimO subfamily. [4Fe-4S] cluster serves as cofactor.

It localises to the cytoplasm. It catalyses the reaction L-aspartate(89)-[ribosomal protein uS12]-hydrogen + (sulfur carrier)-SH + AH2 + 2 S-adenosyl-L-methionine = 3-methylsulfanyl-L-aspartate(89)-[ribosomal protein uS12]-hydrogen + (sulfur carrier)-H + 5'-deoxyadenosine + L-methionine + A + S-adenosyl-L-homocysteine + 2 H(+). Its function is as follows. Catalyzes the methylthiolation of an aspartic acid residue of ribosomal protein uS12. This chain is Ribosomal protein uS12 methylthiotransferase RimO, found in Methylococcus capsulatus (strain ATCC 33009 / NCIMB 11132 / Bath).